Consider the following 245-residue polypeptide: Ubiquinone/menaquinone biosynthesis C-methyltransferase UbiE (245 aa).

Residues Thr-71, Asp-92, and 118–119 (DA) contribute to the S-adenosyl-L-methionine site.

It belongs to the class I-like SAM-binding methyltransferase superfamily. MenG/UbiE family.

The enzyme catalyses a 2-demethylmenaquinol + S-adenosyl-L-methionine = a menaquinol + S-adenosyl-L-homocysteine + H(+). It catalyses the reaction a 2-methoxy-6-(all-trans-polyprenyl)benzene-1,4-diol + S-adenosyl-L-methionine = a 5-methoxy-2-methyl-3-(all-trans-polyprenyl)benzene-1,4-diol + S-adenosyl-L-homocysteine + H(+). It functions in the pathway quinol/quinone metabolism; menaquinone biosynthesis; menaquinol from 1,4-dihydroxy-2-naphthoate: step 2/2. The protein operates within cofactor biosynthesis; ubiquinone biosynthesis. Its function is as follows. Methyltransferase required for the conversion of demethylmenaquinol (DMKH2) to menaquinol (MKH2) and the conversion of 2-polyprenyl-6-methoxy-1,4-benzoquinol (DDMQH2) to 2-polyprenyl-3-methyl-6-methoxy-1,4-benzoquinol (DMQH2). This chain is Ubiquinone/menaquinone biosynthesis C-methyltransferase UbiE, found in Neisseria meningitidis serogroup C (strain 053442).